A 557-amino-acid chain; its full sequence is IgE-binding protein (557 aa).

Positions 113-172 (DGLGKPALSSSEAGEESSSEETDWEEEAAHYQPANWSRKKPKAAGEGQFADWPQGSRLQG) are disordered. Acidic residues predominate over residues 125 to 138 (AGEESSSEETDWEE). One can recognise an Integrase catalytic domain in the interval 344-534 (TAIRPGRRSR…TAAERHVQSQ (191 aa)).

This chain is IgE-binding protein (Iap), found in Mus musculus (Mouse).